The following is a 1041-amino-acid chain: Probable rhamnogalacturonate lyase C (1041 aa).

The N-terminal stretch at methionine 1–alanine 21 is a signal peptide. N-linked (GlcNAc...) asparagine glycans are attached at residues asparagine 28, asparagine 94, asparagine 116, asparagine 142, asparagine 231, asparagine 283, asparagine 528, and asparagine 634. Residues isoleucine 703 to glycine 728 form a disordered region. A compositionally biased stretch (basic residues) spans cysteine 707–arginine 720. The N-linked (GlcNAc...) asparagine glycan is linked to asparagine 864.

This sequence belongs to the polysaccharide lyase 4 family.

It is found in the secreted. The catalysed reaction is Endotype eliminative cleavage of L-alpha-rhamnopyranosyl-(1-&gt;4)-alpha-D-galactopyranosyluronic acid bonds of rhamnogalacturonan I domains in ramified hairy regions of pectin leaving L-rhamnopyranose at the reducing end and 4-deoxy-4,5-unsaturated D-galactopyranosyluronic acid at the non-reducing end.. Its function is as follows. Pectinolytic enzymes consist of four classes of enzymes: pectin lyase, polygalacturonase, pectin methylesterase and rhamnogalacturonase. Degrades the rhamnogalacturonan I (RG-I) backbone of pectin. The sequence is that of Probable rhamnogalacturonate lyase C (rglC) from Emericella nidulans (strain FGSC A4 / ATCC 38163 / CBS 112.46 / NRRL 194 / M139) (Aspergillus nidulans).